The primary structure comprises 546 residues: Putative serine hydroxymethyltransferase, mitochondrial (546 aa).

The transit peptide at 1-64 (MSSFQSTAAV…RFSSSSIAND (64 aa)) directs the protein to the mitochondrion. Position 305 is an N6-(pyridoxal phosphate)lysine (K305).

It belongs to the SHMT family. In terms of assembly, homotetramer. Pyridoxal 5'-phosphate serves as cofactor.

It localises to the mitochondrion. The enzyme catalyses (6R)-5,10-methylene-5,6,7,8-tetrahydrofolate + glycine + H2O = (6S)-5,6,7,8-tetrahydrofolate + L-serine. The protein operates within one-carbon metabolism; tetrahydrofolate interconversion. In terms of biological role, interconversion of serine and glycine. The chain is Putative serine hydroxymethyltransferase, mitochondrial (cbs-2) from Neurospora crassa (strain ATCC 24698 / 74-OR23-1A / CBS 708.71 / DSM 1257 / FGSC 987).